The primary structure comprises 353 residues: Histidinol-phosphate aminotransferase (353 aa).

Lys211 is subject to N6-(pyridoxal phosphate)lysine.

This sequence belongs to the class-II pyridoxal-phosphate-dependent aminotransferase family. Histidinol-phosphate aminotransferase subfamily. Homodimer. Pyridoxal 5'-phosphate serves as cofactor.

The catalysed reaction is L-histidinol phosphate + 2-oxoglutarate = 3-(imidazol-4-yl)-2-oxopropyl phosphate + L-glutamate. Its pathway is amino-acid biosynthesis; L-histidine biosynthesis; L-histidine from 5-phospho-alpha-D-ribose 1-diphosphate: step 7/9. This Klebsiella pneumoniae (strain 342) protein is Histidinol-phosphate aminotransferase.